A 469-amino-acid chain; its full sequence is Asparagine--tRNA ligase (469 aa).

Belongs to the class-II aminoacyl-tRNA synthetase family. Homodimer.

The protein localises to the cytoplasm. The catalysed reaction is tRNA(Asn) + L-asparagine + ATP = L-asparaginyl-tRNA(Asn) + AMP + diphosphate + H(+). This chain is Asparagine--tRNA ligase, found in Porphyromonas gingivalis (strain ATCC BAA-308 / W83).